Consider the following 188-residue polypeptide: UPF0301 protein PD_1276 (188 aa).

The protein belongs to the UPF0301 (AlgH) family.

The polypeptide is UPF0301 protein PD_1276 (Xylella fastidiosa (strain Temecula1 / ATCC 700964)).